Reading from the N-terminus, the 766-residue chain is Sucrose synthase (766 aa).

A GT-B glycosyltransferase region spans residues 220 to 698 (MVFNVVILSV…GLLRIKERYT (479 aa)).

The protein belongs to the glycosyltransferase 1 family. Plant sucrose synthase subfamily. As to expression, expressed most predominantly in tap root.

The enzyme catalyses an NDP-alpha-D-glucose + D-fructose = a ribonucleoside 5'-diphosphate + sucrose + H(+). Functionally, sucrose-cleaving enzyme that provides UDP-glucose and fructose for various metabolic pathways. This chain is Sucrose synthase (SS1), found in Beta vulgaris (Sugar beet).